The primary structure comprises 483 residues: ATP synthase subunit beta (483 aa).

Residue 169-176 participates in ATP binding; sequence GGAGVGKT.

This sequence belongs to the ATPase alpha/beta chains family. As to quaternary structure, F-type ATPases have 2 components, CF(1) - the catalytic core - and CF(0) - the membrane proton channel. CF(1) has five subunits: alpha(3), beta(3), gamma(1), delta(1), epsilon(1). CF(0) has three main subunits: a(1), b(2) and c(9-12). The alpha and beta chains form an alternating ring which encloses part of the gamma chain. CF(1) is attached to CF(0) by a central stalk formed by the gamma and epsilon chains, while a peripheral stalk is formed by the delta and b chains.

It is found in the cell membrane. It carries out the reaction ATP + H2O + 4 H(+)(in) = ADP + phosphate + 5 H(+)(out). Its function is as follows. Produces ATP from ADP in the presence of a proton gradient across the membrane. The catalytic sites are hosted primarily by the beta subunits. This is ATP synthase subunit beta from Rhodococcus jostii (strain RHA1).